Here is a 121-residue protein sequence, read N- to C-terminus: NADPH-dependent 7-cyano-7-deazaguanine reductase (121 aa).

The Thioimide intermediate role is filled by Cys36. Asp43 functions as the Proton donor in the catalytic mechanism. Substrate contacts are provided by residues 58–60 (VEL) and 77–78 (YE).

The protein belongs to the GTP cyclohydrolase I family. QueF type 1 subfamily.

The protein localises to the cytoplasm. The catalysed reaction is 7-aminomethyl-7-carbaguanine + 2 NADP(+) = 7-cyano-7-deazaguanine + 2 NADPH + 3 H(+). Its pathway is tRNA modification; tRNA-queuosine biosynthesis. Functionally, catalyzes the NADPH-dependent reduction of 7-cyano-7-deazaguanine (preQ0) to 7-aminomethyl-7-deazaguanine (preQ1). The protein is NADPH-dependent 7-cyano-7-deazaguanine reductase of Rhodopirellula baltica (strain DSM 10527 / NCIMB 13988 / SH1).